The following is a 134-amino-acid chain: Profilin-2 (134 aa).

Cysteine 13 and cysteine 118 are oxidised to a cystine. The Involved in PIP2 interaction motif lies at alanine 84 to threonine 100. Threonine 114 is subject to Phosphothreonine.

Belongs to the profilin family. Phosphorylated by MAP kinases.

Its subcellular location is the cytoplasm. The protein resides in the cytoskeleton. The polypeptide is Profilin-2 (Olea europaea (Common olive)).